Here is a 347-residue protein sequence, read N- to C-terminus: Ornithine carbamoyltransferase (347 aa).

Carbamoyl phosphate contacts are provided by residues 56–59, Q83, R107, and 134–137; these read STRT and HPTQ. L-ornithine contacts are provided by residues N168, D232, and 236–237; that span reads SM. Carbamoyl phosphate is bound by residues 274-275 and R320; that span reads CL.

Belongs to the aspartate/ornithine carbamoyltransferase superfamily. OTCase family.

It is found in the cytoplasm. The catalysed reaction is carbamoyl phosphate + L-ornithine = L-citrulline + phosphate + H(+). Reversibly catalyzes the transfer of the carbamoyl group from carbamoyl phosphate (CP) to the N(epsilon) atom of ornithine (ORN) to produce L-citrulline. This Blochmanniella floridana protein is Ornithine carbamoyltransferase.